Here is a 325-residue protein sequence, read N- to C-terminus: Probable isoaspartyl peptidase/L-asparaginase GA20639 (325 aa).

Catalysis depends on T184, which acts as the Nucleophile. Residues 212–215 and 235–238 each bind substrate; these read RIGD and TGHG.

It belongs to the Ntn-hydrolase family. As to quaternary structure, heterodimer of an alpha and beta chain produced by autocleavage. Cleaved into an alpha and beta chain by autocatalysis; this activates the enzyme. The N-terminal residue of the beta subunit is responsible for the nucleophile hydrolase activity.

The enzyme catalyses L-asparagine + H2O = L-aspartate + NH4(+). It catalyses the reaction Cleavage of a beta-linked Asp residue from the N-terminus of a polypeptide.. In terms of biological role, has both L-asparaginase and beta-aspartyl peptidase activity. Does not have aspartylglucosaminidase activity and is inactive toward GlcNAc-L-Asn. Likewise, has no activity toward glutamine. The protein is Probable isoaspartyl peptidase/L-asparaginase GA20639 of Drosophila pseudoobscura pseudoobscura (Fruit fly).